The chain runs to 209 residues: MSGQGFSNADTGNKPADPYKQANLDTEVPLDQKINDLSSFMTSNKFSMMTTRDSKTGYLLSRCMALAATESGGIDLLFHTNTESGKTDDLKSDEHINISFLNSTTGDWASVSGTASIVTDRDLVRKHYNPHLKAWFGDLGDGVHDGGPEDPRVGVIRVKMVTAHYAISTKNIVGKVADVAQGVITGKPATVNKLREISEQEVQSWRSSH.

The span at Met-1–Thr-11 shows a compositional bias: polar residues. Residues Met-1–Leu-24 are disordered.

This chain is Protein bli-3 (bli-3), found in Neurospora crassa (strain ATCC 24698 / 74-OR23-1A / CBS 708.71 / DSM 1257 / FGSC 987).